Reading from the N-terminus, the 343-residue chain is 3-isopropylmalate dehydrogenase (343 aa).

Substrate contacts are provided by arginine 94, arginine 104, arginine 128, and aspartate 218. Residues aspartate 218, aspartate 242, and aspartate 246 each contribute to the Mg(2+) site. 278 to 290 (GSAPDIAGQNKAN) contributes to the NAD(+) binding site.

This sequence belongs to the isocitrate and isopropylmalate dehydrogenases family. LeuB type 2 subfamily. Homodimer. Mg(2+) serves as cofactor. Mn(2+) is required as a cofactor.

It localises to the cytoplasm. The enzyme catalyses (2R,3S)-3-isopropylmalate + NAD(+) = 4-methyl-2-oxopentanoate + CO2 + NADH. It participates in amino-acid biosynthesis; L-leucine biosynthesis; L-leucine from 3-methyl-2-oxobutanoate: step 3/4. In terms of biological role, catalyzes the oxidation of 3-carboxy-2-hydroxy-4-methylpentanoate (3-isopropylmalate) to 3-carboxy-4-methyl-2-oxopentanoate. The product decarboxylates to 4-methyl-2 oxopentanoate. This is 3-isopropylmalate dehydrogenase from Bifidobacterium longum subsp. infantis (strain ATCC 15697 / DSM 20088 / JCM 1222 / NCTC 11817 / S12).